A 155-amino-acid chain; its full sequence is Ribosomal RNA large subunit methyltransferase H (155 aa).

S-adenosyl-L-methionine-binding positions include L72, G103, and 122-127 (LSKLTM).

Belongs to the RNA methyltransferase RlmH family. As to quaternary structure, homodimer.

The protein resides in the cytoplasm. The catalysed reaction is pseudouridine(1915) in 23S rRNA + S-adenosyl-L-methionine = N(3)-methylpseudouridine(1915) in 23S rRNA + S-adenosyl-L-homocysteine + H(+). Its function is as follows. Specifically methylates the pseudouridine at position 1915 (m3Psi1915) in 23S rRNA. The protein is Ribosomal RNA large subunit methyltransferase H of Methylobacillus flagellatus (strain ATCC 51484 / DSM 6875 / VKM B-1610 / KT).